A 463-amino-acid polypeptide reads, in one-letter code: MRDLILFLSLLHTIFASLFSLKPPSQDDFYKAPAGFKAAKPGDILKTRKSPNKPSSLYAPVDVQNSWQLLVRSEDSFGNPNAFVTTIIQPKNADPSKVVSYQNWEDASNINCSPSYGSQLGAPLSTILTQLDMTFIVPPLKSGYYVVLPDYEGPKSTFGVGRQSGKATLDSIKAVLKTKDFSGINDDAKVVLWGYSGGSFASGWAAVLQPEYAPELKDNLIGAALGGFAANLTGIAESVDGEVFSGFIPLALNGIANEYPDFKKRLYEEVKPGAKADLQKGAENCLAASLISYPMYQYFTGPRRVFEKGWSLLEDKTIGKTLEDNLLIALSKEHMPQIPIFVYHGTIDKIIPIKDSIKIYKNWCDWGIGSFEFSEDKSNGHTTETVVGAPAALTWIDARFAGKPAVEGCSFTTRASNFLYPNISESAASYFKGIYQTILRSKLGSGVTSDDVSVNGLRSLYHT.

The N-terminal stretch at 1 to 16 (MRDLILFLSLLHTIFA) is a signal peptide. A disulfide bridge connects residues Cys-112 and Cys-285. Ser-196 (charge relay system) is an active-site residue. Asn-231 carries an N-linked (GlcNAc...) asparagine glycan. Active-site charge relay system residues include Asp-348 and His-381. A disulfide bridge links Cys-364 with Cys-409. Residue Asn-422 is glycosylated (N-linked (GlcNAc...) asparagine).

The protein belongs to the AB hydrolase superfamily. Lipase family. Class Lip subfamily.

It is found in the secreted. It catalyses the reaction a triacylglycerol + H2O = a diacylglycerol + a fatty acid + H(+). Functionally, secreted lipase that is able to hydrolyze both the neutral triacylglycerols and the monopalmitate ester Tween 40, allowing the use of hydrolyzed products as carbon sources. Has broad lipolytic activity, which may be important for colonization and subsequent infection, therefore contributing to the persistence and virulence in human tissue. This is Lipase 6 from Candida albicans (strain SC5314 / ATCC MYA-2876) (Yeast).